The following is a 159-amino-acid chain: Phospholipase A2 AP-PLA2-I (159 aa).

The first 19 residues, 1–19, serve as a signal peptide directing secretion; it reads MNFLVVIVTTVSLAGAASA. The propeptide occupies 20-23; the sequence is GEIQ. 6 cysteine pairs are disulfide-bonded: Cys51–Cys159, Cys53–Cys69, Cys68–Cys139, Cys75–Cys132, Cys85–Cys125, and Cys110–Cys130. Residues Tyr52, Gly54, and Gly56 each coordinate Ca(2+). His72 is a catalytic residue. Asp73 contacts Ca(2+). The active site involves Asp133.

The protein belongs to the phospholipase A2 family. Group I subfamily. Homodimer. The cofactor is Ca(2+). In terms of tissue distribution, expressed by the venom gland.

It is found in the secreted. It catalyses the reaction a 1,2-diacyl-sn-glycero-3-phosphocholine + H2O = a 1-acyl-sn-glycero-3-phosphocholine + a fatty acid + H(+). Functionally, starfish phospholipase A2 (PLA2) that has hemorrhagic and capillary permeability-increasing activities and hence is considered to be deeply involved in the local inflammation. Shows hemolytic activity only in the presence of phosphatidylcholine (PC). PLA2 catalyzes the calcium-dependent hydrolysis of the 2-acyl groups in 3-sn-phosphoglycerides. The sequence is that of Phospholipase A2 AP-PLA2-I from Acanthaster planci (Crown-of-thorns starfish).